The sequence spans 637 residues: 3D-(3,5/4)-trihydroxycyclohexane-1,2-dione hydrolase (637 aa).

Glu-65 is a thiamine diphosphate binding site. Residues 441–521 (SLPGDLQRLW…INVLLFDNSG (81 aa)) are thiamine pyrophosphate binding. Mg(2+) contacts are provided by Asp-492 and Asn-519.

This sequence belongs to the TPP enzyme family. Mg(2+) serves as cofactor. Thiamine diphosphate is required as a cofactor.

The enzyme catalyses 3D-3,5/4-trihydroxycyclohexane-1,2-dione + H2O = 5-deoxy-D-glucuronate + H(+). It functions in the pathway polyol metabolism; myo-inositol degradation into acetyl-CoA; acetyl-CoA from myo-inositol: step 3/7. Involved in the cleavage of the C1-C2 bond of 3D-(3,5/4)-trihydroxycyclohexane-1,2-dione (THcHDO) to yield 5-deoxy-glucuronate (5DG). In Halalkalibacterium halodurans (strain ATCC BAA-125 / DSM 18197 / FERM 7344 / JCM 9153 / C-125) (Bacillus halodurans), this protein is 3D-(3,5/4)-trihydroxycyclohexane-1,2-dione hydrolase.